We begin with the raw amino-acid sequence, 631 residues long: 1-deoxy-D-xylulose-5-phosphate synthase (631 aa).

Positions 1 to 21 are disordered; it reads MPTTFHEIPRERPLTPLLDSA. Thiamine diphosphate-binding positions include His-87 and 128-130; that span reads GHS. Asp-159 contributes to the Mg(2+) binding site. Residues 160-161, Asn-188, Phe-295, and Glu-377 contribute to the thiamine diphosphate site; that span reads GA. Asn-188 is a binding site for Mg(2+).

The protein belongs to the transketolase family. DXPS subfamily. Homodimer. It depends on Mg(2+) as a cofactor. Requires thiamine diphosphate as cofactor.

The catalysed reaction is D-glyceraldehyde 3-phosphate + pyruvate + H(+) = 1-deoxy-D-xylulose 5-phosphate + CO2. It participates in metabolic intermediate biosynthesis; 1-deoxy-D-xylulose 5-phosphate biosynthesis; 1-deoxy-D-xylulose 5-phosphate from D-glyceraldehyde 3-phosphate and pyruvate: step 1/1. In terms of biological role, catalyzes the acyloin condensation reaction between C atoms 2 and 3 of pyruvate and glyceraldehyde 3-phosphate to yield 1-deoxy-D-xylulose-5-phosphate (DXP). The chain is 1-deoxy-D-xylulose-5-phosphate synthase from Ectopseudomonas mendocina (strain ymp) (Pseudomonas mendocina).